Reading from the N-terminus, the 1074-residue chain is Carbamoyl phosphate synthase large chain (1074 aa).

The interval 1–399 (MPKRSDIKKV…ALMKAIRSLD (399 aa)) is carboxyphosphate synthetic domain. 12 residues coordinate ATP: Arg129, Arg169, Gly175, Gly176, Glu208, Val210, Glu215, Gly241, Ile242, His243, Gln284, and Glu296. In terms of domain architecture, ATP-grasp 1 spans 133–325 (KKAMERIGEP…IARVTAKIAI (193 aa)). Residues Gln284, Glu296, and Asn298 each contribute to the Mg(2+) site. Mn(2+)-binding residues include Gln284, Glu296, and Asn298. The oligomerization domain stretch occupies residues 400–543 (IDIDLGYNGK…YSTYDEECEL (144 aa)). The interval 544–933 (NPSDNKKVLI…FKAEMSAENN (390 aa)) is carbamoyl phosphate synthetic domain. In terms of domain architecture, ATP-grasp 2 spans 674 to 865 (NKLLNKLGIP…LAKIAAKVMA (192 aa)). 10 residues coordinate ATP: Arg710, Asp749, Leu751, Glu756, Gly781, Ile782, His783, Ser784, Gln824, and Glu836. Mg(2+)-binding residues include Gln824, Glu836, and Asn838. The Mn(2+) site is built by Gln824, Glu836, and Asn838. The MGS-like domain occupies 932–1074 (NNLPLDGIVF…YHREVRYRAL (143 aa)). The interval 934–1074 (LPLDGIVFIS…YHREVRYRAL (141 aa)) is allosteric domain.

The protein belongs to the CarB family. Composed of two chains; the small (or glutamine) chain promotes the hydrolysis of glutamine to ammonia, which is used by the large (or ammonia) chain to synthesize carbamoyl phosphate. Tetramer of heterodimers (alpha,beta)4. Requires Mg(2+) as cofactor. It depends on Mn(2+) as a cofactor.

The enzyme catalyses hydrogencarbonate + L-glutamine + 2 ATP + H2O = carbamoyl phosphate + L-glutamate + 2 ADP + phosphate + 2 H(+). It carries out the reaction hydrogencarbonate + NH4(+) + 2 ATP = carbamoyl phosphate + 2 ADP + phosphate + 2 H(+). It functions in the pathway amino-acid biosynthesis; L-arginine biosynthesis; carbamoyl phosphate from bicarbonate: step 1/1. Its pathway is pyrimidine metabolism; UMP biosynthesis via de novo pathway; (S)-dihydroorotate from bicarbonate: step 1/3. Large subunit of the glutamine-dependent carbamoyl phosphate synthetase (CPSase). CPSase catalyzes the formation of carbamoyl phosphate from the ammonia moiety of glutamine, carbonate, and phosphate donated by ATP, constituting the first step of 2 biosynthetic pathways, one leading to arginine and/or urea and the other to pyrimidine nucleotides. The large subunit (synthetase) binds the substrates ammonia (free or transferred from glutamine from the small subunit), hydrogencarbonate and ATP and carries out an ATP-coupled ligase reaction, activating hydrogencarbonate by forming carboxy phosphate which reacts with ammonia to form carbamoyl phosphate. The chain is Carbamoyl phosphate synthase large chain from Methanothrix thermoacetophila (strain DSM 6194 / JCM 14653 / NBRC 101360 / PT) (Methanosaeta thermophila).